Consider the following 99-residue polypeptide: MRIGVVGDPDVVVGFRLAGLTDVYEVKSPEQAAKAIEELNSNSEIGLIITTERIGEQVRDTISAVKKVVVEVPDKNGPIVRENDPVKVLVRNAVGVDIK.

This sequence belongs to the V-ATPase F subunit family. Has multiple subunits with at least A(3), B(3), C, D, E, F, H, I and proteolipid K(x).

The protein resides in the cell membrane. In terms of biological role, component of the A-type ATP synthase that produces ATP from ADP in the presence of a proton gradient across the membrane. The polypeptide is A-type ATP synthase subunit F (Methanococcus maripaludis (strain C5 / ATCC BAA-1333)).